A 212-amino-acid polypeptide reads, in one-letter code: Cyclin-dependent kinase 2-interacting protein (212 aa).

Met-1 bears the N-acetylmethionine mark. A phosphoserine mark is found at Ser-69 and Ser-73. Residues 73–107 (SKENEEKVCLEYNEELEKLCEELQATLDGLTKIQV) are a coiled coil. Ser-202 serves as a coordination point for Na(+).

Belongs to the CINP family. Homodimer. Part of the 55LCC heterohexameric ATPase complex composed at least of AIRIM, AFG2A, AFG2B and CINP. Interacts with AIRIM. Interacts with CDK2 and CDC7. Interacts with the components of the replication complex, MCM2, MCM3, MCM4, MCM5, MCM6, MCM7 and with ORC2-containing complexes. Interacts with ATRIP. Interacts with CEP152. Associates with pre-60S ribosomal particles. Post-translationally, phosphorylated by CDC7 but not by CDK2.

It is found in the nucleus. Component of the DNA replication complex, which interacts with two kinases, CDK2 and CDC7, thereby providing a functional and physical link between CDK2 and CDC7 during firing of the origins of replication. Regulates ATR-mediated checkpoint signaling in response to DNA damage. Part of the 55LCC heterohexameric ATPase complex which is chromatin-associated and promotes replisome proteostasis to maintain replication fork progression and genome stability. Required for replication fork progression, sister chromatid cohesion, and chromosome stability. The ATPase activity is specifically enhanced by replication fork DNA and is coupled to cysteine protease-dependent cleavage of replisome substrates in response to replication fork damage. Uses ATPase activity to process replisome substrates in S-phase, facilitating their proteolytic turnover from chromatin to ensure DNA replication and mitotic fidelity. As part of 55LCC complex, also involved in the cytoplasmic maturation steps of pre-60S ribosomal particles by promoting the release of shuttling protein RSL24D1/RLP24 from the pre-ribosomal particles. The chain is Cyclin-dependent kinase 2-interacting protein from Homo sapiens (Human).